A 938-amino-acid polypeptide reads, in one-letter code: Probable outer membrane protein pmp15 (938 aa).

Positions 1 to 17 (MRFFCFGMLLPFTFVLA) are cleaved as a signal peptide. Positions 659-938 (DEEKGHAASL…YLNVASRMRF (280 aa)) constitute an Autotransporter domain.

It belongs to the PMP outer membrane protein family.

The protein localises to the secreted. It is found in the cell wall. The protein resides in the cell outer membrane. This is Probable outer membrane protein pmp15 (pmp15) from Chlamydia pneumoniae (Chlamydophila pneumoniae).